The primary structure comprises 183 residues: NEDD8-conjugating enzyme Ubc12 (183 aa).

Met1 bears the N-acetylmethionine mark. Residues 1–29 (MIKLFSLKQQKKEEESAGGTKGSSKKASA) form a disordered region. The interaction with UBA3 stretch occupies residues 1 to 57 (MIKLFSLKQQKKEEESAGGTKGSSKKASAAQLRIQKDINELNLPKTCDISFSDPDDL). An N6-acetyllysine modification is found at Lys3. The 145-residue stretch at 29–173 (AAQLRIQKDI…VQRSMRGGYI (145 aa)) folds into the UBC core domain. Residue Ser50 is modified to Phosphoserine. The Glycyl thioester intermediate role is filled by Cys111. Arg169 is subject to Asymmetric dimethylarginine; alternate. Arg169 carries the post-translational modification Omega-N-methylarginine; alternate.

Belongs to the ubiquitin-conjugating enzyme family. UBC12 subfamily. As to quaternary structure, interacts with UBA3 and RBX1. Interacts (N-terminally acetylated form) with (via DCUN1 domain) DCUN1D1, DCUN1D2, DCUN1D3, DCUN1D4 and DCUN1D5. In terms of processing, the acetylation of Met-1 increases affinity for DCUN1D1 by about 2 orders of magnitude and is crucial for NEDD8 transfer to cullins.

It carries out the reaction [E1 NEDD8-activating enzyme]-S-[NEDD8 protein]-yl-L-cysteine + [E2 NEDD8-conjugating enzyme]-L-cysteine = [E1 NEDD8-activating enzyme]-L-cysteine + [E2 NEDD8-conjugating enzyme]-S-[NEDD8-protein]-yl-L-cysteine.. The protein operates within protein modification; protein neddylation. Its function is as follows. Accepts the ubiquitin-like protein NEDD8 from the UBA3-NAE1 E1 complex and catalyzes its covalent attachment to other proteins. The specific interaction with the E3 ubiquitin ligase RBX1, but not RBX2, suggests that the RBX1-UBE2M complex neddylates specific target proteins, such as CUL1, CUL2, CUL3 and CUL4. Involved in cell proliferation. This Mus musculus (Mouse) protein is NEDD8-conjugating enzyme Ubc12 (Ube2m).